Consider the following 156-residue polypeptide: MSNPSDGSTDPKTTFMIEEIQELLPHRYPFLLVDRIIDYKESERAVGIKNVTMNEEFFQGHFPGRPLMPGVLIVEAMAQVGGIVLAQLPDIPSGKLFVFTGIDKVRIRRSVVPGDQLVITAEFLSLKRKRFAMMSTKAEVDGKLACSGELMFAMVD.

His-61 is a catalytic residue.

The protein belongs to the thioester dehydratase family. FabZ subfamily.

The protein localises to the cytoplasm. The catalysed reaction is a (3R)-hydroxyacyl-[ACP] = a (2E)-enoyl-[ACP] + H2O. Involved in unsaturated fatty acids biosynthesis. Catalyzes the dehydration of short chain beta-hydroxyacyl-ACPs and long chain saturated and unsaturated beta-hydroxyacyl-ACPs. The chain is 3-hydroxyacyl-[acyl-carrier-protein] dehydratase FabZ from Acaryochloris marina (strain MBIC 11017).